Here is a 493-residue protein sequence, read N- to C-terminus: Probable GTP-binding protein OBGM, mitochondrial (493 aa).

The transit peptide at Met1 to Pro28 directs the protein to the mitochondrion. Residues Thr48–Ile303 form the Obg domain. Disordered regions lie at residues Ser65–Gly89 and Gly146–Asp215. Residues Ser187–Gln196 are compositionally biased toward acidic residues. The OBG-type G domain occupies Ala304–Asp476. Residues Gly310–Ser317 and Asp356–Leu360 contribute to the GTP site.

This sequence belongs to the TRAFAC class OBG-HflX-like GTPase superfamily. OBG GTPase family.

The protein resides in the mitochondrion. Functionally, may bind GTP and have GTPase activity. The chain is Probable GTP-binding protein OBGM, mitochondrial (ATOBGM) from Arabidopsis thaliana (Mouse-ear cress).